Here is a 492-residue protein sequence, read N- to C-terminus: Protein nucleotidyltransferase YdiU (492 aa).

ATP contacts are provided by Gly91, Gly93, Arg94, Lys114, Asp126, Gly127, Arg180, and Arg187. The active-site Proton acceptor is Asp256. Mg(2+)-binding residues include Asn257 and Asp266. Asp266 provides a ligand contact to ATP.

Belongs to the SELO family. Mg(2+) is required as a cofactor. It depends on Mn(2+) as a cofactor.

The enzyme catalyses L-seryl-[protein] + ATP = 3-O-(5'-adenylyl)-L-seryl-[protein] + diphosphate. It carries out the reaction L-threonyl-[protein] + ATP = 3-O-(5'-adenylyl)-L-threonyl-[protein] + diphosphate. The catalysed reaction is L-tyrosyl-[protein] + ATP = O-(5'-adenylyl)-L-tyrosyl-[protein] + diphosphate. It catalyses the reaction L-histidyl-[protein] + UTP = N(tele)-(5'-uridylyl)-L-histidyl-[protein] + diphosphate. The enzyme catalyses L-seryl-[protein] + UTP = O-(5'-uridylyl)-L-seryl-[protein] + diphosphate. It carries out the reaction L-tyrosyl-[protein] + UTP = O-(5'-uridylyl)-L-tyrosyl-[protein] + diphosphate. Functionally, nucleotidyltransferase involved in the post-translational modification of proteins. It can catalyze the addition of adenosine monophosphate (AMP) or uridine monophosphate (UMP) to a protein, resulting in modifications known as AMPylation and UMPylation. The protein is Protein nucleotidyltransferase YdiU of Synechococcus sp. (strain ATCC 27144 / PCC 6301 / SAUG 1402/1) (Anacystis nidulans).